A 390-amino-acid polypeptide reads, in one-letter code: Ribonuclease D (390 aa).

Residues 7–173 (ITDSATLAAL…TLFPMLLKEL (167 aa)) form the 3'-5' exonuclease domain. An HRDC domain is found at 212-293 (KADILGRLKA…ENAEALRPEE (82 aa)).

The protein belongs to the RNase D family. A divalent metal cation is required as a cofactor.

It localises to the cytoplasm. The catalysed reaction is Exonucleolytic cleavage that removes extra residues from the 3'-terminus of tRNA to produce 5'-mononucleotides.. Functionally, exonuclease involved in the 3' processing of various precursor tRNAs. Initiates hydrolysis at the 3'-terminus of an RNA molecule and releases 5'-mononucleotides. This Zymomonas mobilis subsp. mobilis (strain ATCC 31821 / ZM4 / CP4) protein is Ribonuclease D.